Reading from the N-terminus, the 188-residue chain is Putative manganese efflux pump MntP (188 aa).

6 helical membrane passes run 3–23 (ISAT…ASIG), 41–61 (LIFG…GMLA), 62–82 (SQFI…FLGG), 106–128 (WILV…GLAF), 143–163 (ATLI…PLLG), and 168–188 (ILGG…HFAG).

It belongs to the MntP (TC 9.B.29) family.

The protein resides in the cell inner membrane. Its function is as follows. Probably functions as a manganese efflux pump. The sequence is that of Putative manganese efflux pump MntP from Enterobacter sp. (strain 638).